The sequence spans 425 residues: Enolase (425 aa).

Q163 provides a ligand contact to (2R)-2-phosphoglycerate. E205 (proton donor) is an active-site residue. D242, E285, and D312 together coordinate Mg(2+). (2R)-2-phosphoglycerate is bound by residues K337, R366, S367, and K388. K337 serves as the catalytic Proton acceptor.

This sequence belongs to the enolase family. It depends on Mg(2+) as a cofactor.

Its subcellular location is the cytoplasm. It is found in the secreted. The protein localises to the cell surface. It catalyses the reaction (2R)-2-phosphoglycerate = phosphoenolpyruvate + H2O. Its pathway is carbohydrate degradation; glycolysis; pyruvate from D-glyceraldehyde 3-phosphate: step 4/5. In terms of biological role, catalyzes the reversible conversion of 2-phosphoglycerate (2-PG) into phosphoenolpyruvate (PEP). It is essential for the degradation of carbohydrates via glycolysis. This Jannaschia sp. (strain CCS1) protein is Enolase.